Consider the following 477-residue polypeptide: MSIPRLKSYLTMFAAVLMLGQVLTAQAEEALPDFTSLVEQASPAVVNISTKQKLPDRRIAAGQMPDLEGLPPMFREFFERNMPQQPRSPRGDRQREAQSLGSGFIISSDGYVLTNNHVVADADEIIVRLSDRSELQAKLVGTDPRTDVALLKVEGKNLPIVKLGDSEKLKVGEWVLAIGSPFGFDHSVTKGIVSAKGRTLPNDTYVPFIQTDVAINPGNSGGPLFNMKGEVVGINSQIFTRSGGFMGLSFAIPIDVAIDVSNQLKKDGKVSRGWLGVVIQEVNKDLAESFGLDKPAGALVAQVLENGPAAKGGLQVGDVILSMNGQPIVMSADLPHLVGGLKDGEKAKLEIIRNGKRQNLDISVGALPDDDADIGTGAEGSAERSSNRLGVSVADLTAEQKKSLELKGGVVIKEVQDGPAAMIGLRPGDVISHLNNQAIGSAKEFTEIAKELPKNRSVSMRVLRQGRASFITFKLAE.

The first 27 residues, 1–27 (MSIPRLKSYLTMFAAVLMLGQVLTAQA), serve as a signal peptide directing secretion. Residues His-117, Asp-147, and Ser-220 each act as charge relay system in the active site. Residues 218-220 (GNS) and 275-279 (LGVVI) contribute to the substrate site. PDZ domains lie at 264-355 (LKKD…IRNG) and 361-466 (DISV…LRQG).

The protein belongs to the peptidase S1C family.

It localises to the periplasm. It carries out the reaction Acts on substrates that are at least partially unfolded. The cleavage site P1 residue is normally between a pair of hydrophobic residues, such as Val-|-Val.. In terms of biological role, might be efficient in the degradation of transiently denatured and unfolded proteins which accumulate in the periplasm following stress conditions. This Pseudomonas putida (strain GB-1) protein is Probable periplasmic serine endoprotease DegP-like.